Consider the following 686-residue polypeptide: Lysophospholipase 3 (686 aa).

Residues 1 to 26 (MIRPLCSKIIISYIFAISQFLLAANA) form the signal peptide. One can recognise a PLA2c domain in the interval 39–592 (SCPDDINLVR…KNYCWNGTLD (554 aa)). N-linked (GlcNAc...) asparagine glycosylation is found at asparagine 56, asparagine 82, asparagine 129, asparagine 166, asparagine 221, asparagine 283, asparagine 313, asparagine 351, asparagine 495, asparagine 519, asparagine 547, asparagine 571, asparagine 588, and asparagine 614. Asparagine 659 carries the GPI-anchor amidated asparagine lipid modification. The propeptide at 660-686 (SGSHLSGISVKFSAMIMLTLLMFTGAV) is removed in mature form.

This sequence belongs to the lysophospholipase family.

It is found in the cell membrane. It carries out the reaction a 1-acyl-sn-glycero-3-phosphocholine + H2O = sn-glycerol 3-phosphocholine + a fatty acid + H(+). In terms of biological role, sequentially removes both fatty acyl groups from diacylglycerophospholipids and therefore has both phospholipase A and lysophospholipase activities. Substrate preference is phosphatidylserine &gt; phosphatidylinositol. Does not cleave phosphatidylcholine, phosphatidylethanolamine, phosphatidic acid and phosphatidylinositol-bisphosphate. Mainly responsible for the degradation of phosphatidylinositol in vivo. In Saccharomyces cerevisiae (strain ATCC 204508 / S288c) (Baker's yeast), this protein is Lysophospholipase 3 (PLB3).